Here is a 419-residue protein sequence, read N- to C-terminus: DNA ligase (419 aa).

Positions 1 to 120 (MLNHFPGHCS…ARQKRGAHTN (120 aa)) are NTD. Residues 121 to 317 (RGMIPPMLVK…NYHSAHLAKL (197 aa)) form an AD domain region. Catalysis depends on lysine 151, which acts as the N6-AMP-lysine intermediate. ATP contacts are provided by lysine 151, glutamate 203, and phenylalanine 232. Glutamate 203 contributes to the a divalent metal cation binding site. Glutamate 291 serves as a coordination point for a divalent metal cation. Residues isoleucine 294 and lysine 316 each coordinate ATP. The OB domain stretch occupies residues 318-419 (KPLLDAEFIL…REPINVLEII (102 aa)).

This sequence belongs to the ATP-dependent DNA ligase family.

The protein resides in the virion. The catalysed reaction is ATP + (deoxyribonucleotide)n-3'-hydroxyl + 5'-phospho-(deoxyribonucleotide)m = (deoxyribonucleotide)n+m + AMP + diphosphate.. In terms of biological role, very low-fidelity DNA ligase that seals nicks in double-stranded DNA during DNA repair. Together with the viral repair DNA polymerase X, fills the single nucleotide gaps generated by the AP endonuclease. It is not essential for viral replication and recombination. Displays a very low adenylation activity towards DNA with 3'-dideoxy- or 3'-amino-terminated nicks compared to regular nick DNA. The sequence is that of DNA ligase from African swine fever virus (isolate Tick/South Africa/Pretoriuskop Pr4/1996) (ASFV).